Here is a 471-residue protein sequence, read N- to C-terminus: MSQTSLQPVHVVGGGLAGSEAAFQLAERGVPVVLHEMRPVRGTEAHHTDGLAELVCSNSFRSDDAQTNAVGVLHAEMRRAGSLILRCADANQVPAGGALAVDRDGFSQAVTAALAEHPLVEIRREEVTAIPPEEWDNVIIATGPLTSPALAQAVLELTGESALAFFDAIAPIVHLDSIDLSKAWFQSRYDKVGPGGTGADYINCPLDKEQYEAFVDALLASEKVPLRDFEAKTPYFDGCLPIEVMAERGRETLRFGPLKPVGLTNPHNPDVKPHAVIQLRQDNKLGTLYNLVGFQTKMRHGEQVRVFRTIPGLENAEFARLGGLHRNTYLNSPRLLDGTLRLKAAPRLRFAGQITGCEGYVESAAVGLMAGRFAAAERRGEALVPPPATTAHGALLAHITGGHIETVDAGPRSFQPMNVNFGLFPQLDVSPKGADGKRLRGSEKTLAKKRLLAERALSDMSAWLDTPAAAA.

13–18 contributes to the FAD binding site; it reads GGGLAG.

Belongs to the MnmG family. TrmFO subfamily. The cofactor is FAD.

Its subcellular location is the cytoplasm. It catalyses the reaction uridine(54) in tRNA + (6R)-5,10-methylene-5,6,7,8-tetrahydrofolate + NADH + H(+) = 5-methyluridine(54) in tRNA + (6S)-5,6,7,8-tetrahydrofolate + NAD(+). The enzyme catalyses uridine(54) in tRNA + (6R)-5,10-methylene-5,6,7,8-tetrahydrofolate + NADPH + H(+) = 5-methyluridine(54) in tRNA + (6S)-5,6,7,8-tetrahydrofolate + NADP(+). Functionally, catalyzes the folate-dependent formation of 5-methyl-uridine at position 54 (M-5-U54) in all tRNAs. The chain is Methylenetetrahydrofolate--tRNA-(uracil-5-)-methyltransferase TrmFO from Azorhizobium caulinodans (strain ATCC 43989 / DSM 5975 / JCM 20966 / LMG 6465 / NBRC 14845 / NCIMB 13405 / ORS 571).